Consider the following 397-residue polypeptide: Serpin B10 (397 aa).

The Nuclear localization signal signature appears at 74-77 (KKRK).

This sequence belongs to the serpin family. Ov-serpin subfamily.

Its subcellular location is the nucleus. It is found in the cytoplasm. Functionally, protease inhibitor that may play a role in the regulation of protease activities during hematopoiesis and apoptosis induced by TNF. May regulate protease activities in the cytoplasm and in the nucleus. This Bos taurus (Bovine) protein is Serpin B10 (SERPINB10).